The chain runs to 408 residues: Tyrosine--tRNA ligase (408 aa).

The 'HIGH' region signature appears at 50–59 (PTGKDLTLGH). The 'KMSKS' region signature appears at 234–238 (KMSKS). ATP is bound at residue Lys237. The region spanning 346 to 407 (MQAARVLFTA…GKRKYGRVVL (62 aa)) is the S4 RNA-binding domain.

It belongs to the class-I aminoacyl-tRNA synthetase family. TyrS type 2 subfamily. As to quaternary structure, homodimer.

Its subcellular location is the cytoplasm. It catalyses the reaction tRNA(Tyr) + L-tyrosine + ATP = L-tyrosyl-tRNA(Tyr) + AMP + diphosphate + H(+). Catalyzes the attachment of tyrosine to tRNA(Tyr) in a two-step reaction: tyrosine is first activated by ATP to form Tyr-AMP and then transferred to the acceptor end of tRNA(Tyr). The sequence is that of Tyrosine--tRNA ligase from Symbiobacterium thermophilum (strain DSM 24528 / JCM 14929 / IAM 14863 / T).